A 482-amino-acid chain; its full sequence is Phenylalanine--tRNA ligase alpha subunit (482 aa).

L-phenylalanine is bound by residues threonine 327, 366-368 (QIE), and tyrosine 406. Residue glutamate 408 participates in Mg(2+) binding. L-phenylalanine is bound at residue phenylalanine 430.

It belongs to the class-II aminoacyl-tRNA synthetase family. Phe-tRNA synthetase alpha subunit type 2 subfamily. As to quaternary structure, tetramer of two alpha and two beta subunits. Mg(2+) is required as a cofactor.

Its subcellular location is the cytoplasm. The catalysed reaction is tRNA(Phe) + L-phenylalanine + ATP = L-phenylalanyl-tRNA(Phe) + AMP + diphosphate + H(+). The chain is Phenylalanine--tRNA ligase alpha subunit from Thermoplasma volcanium (strain ATCC 51530 / DSM 4299 / JCM 9571 / NBRC 15438 / GSS1).